A 555-amino-acid polypeptide reads, in one-letter code: GPI-anchor transamidase component PIGS (555 aa).

Residues alanine 2–arginine 18 are Cytoplasmic-facing. Arginine 15 and arginine 18 together coordinate a cardiolipin. A helical membrane pass occupies residues serine 19–threonine 39. Residues glutamate 40–glutamine 517 are Lumenal-facing. N-linked (GlcNAc...) asparagine glycans are attached at residues asparagine 267 and asparagine 370. The helical transmembrane segment at lysine 518–proline 532 threads the bilayer. Over isoleucine 533–aspartate 555 the chain is Cytoplasmic.

This sequence belongs to the PIGS family. As to quaternary structure, heteropentamer. Part of the GPI-anchor transamidase complex, consisting of PIGK, PIGT, PIGS, PIGU and GAA1.

The protein localises to the endoplasmic reticulum membrane. It participates in glycolipid biosynthesis; glycosylphosphatidylinositol-anchor biosynthesis. Component of the glycosylphosphatidylinositol-anchor (GPI-anchor) transamidase (GPI-T) complex that catalyzes the formation of the linkage between a proprotein and a GPI-anchor and participates in GPI anchored protein biosynthesis. The protein is GPI-anchor transamidase component PIGS of Mus musculus (Mouse).